A 352-amino-acid polypeptide reads, in one-letter code: Dihydrorhizobitoxine desaturase (352 aa).

3 helical membrane passes run Leu53 to Tyr73, Leu89 to Phe109, and Ile204 to Ile224.

This sequence belongs to the fatty acid desaturase type 1 family.

Its subcellular location is the cell inner membrane. The catalysed reaction is dihydrorhizobitoxine + 2 reduced [2Fe-2S]-[ferredoxin] + O2 + 2 H(+) = rhizobitoxine + 2 oxidized [2Fe-2S]-[ferredoxin] + 2 H2O. In terms of biological role, involved in the biosynthesis of the nodulation enhancer compound rhizobitoxine. Catalyzes the final step of the pathway, the introduction of a carbon double bond into the C3 position of dihydrorhizobitoxine to produce rhizobitoxine. This chain is Dihydrorhizobitoxine desaturase, found in Bradyrhizobium elkanii.